The following is a 118-amino-acid chain: Small ribosomal subunit protein uS13 (118 aa).

The interval Arg-93–Lys-118 is disordered.

Belongs to the universal ribosomal protein uS13 family. As to quaternary structure, part of the 30S ribosomal subunit. Forms a loose heterodimer with protein S19. Forms two bridges to the 50S subunit in the 70S ribosome.

Located at the top of the head of the 30S subunit, it contacts several helices of the 16S rRNA. In the 70S ribosome it contacts the 23S rRNA (bridge B1a) and protein L5 of the 50S subunit (bridge B1b), connecting the 2 subunits; these bridges are implicated in subunit movement. Contacts the tRNAs in the A and P-sites. This is Small ribosomal subunit protein uS13 from Pseudomonas fluorescens (strain ATCC BAA-477 / NRRL B-23932 / Pf-5).